The sequence spans 274 residues: Diaminopimelate epimerase (274 aa).

Residues N11, Q44, and N64 each contribute to the substrate site. C73 functions as the Proton donor in the catalytic mechanism. Substrate-binding positions include 74–75 (GN), N157, N190, and 208–209 (ER). C217 acts as the Proton acceptor in catalysis. 218 to 219 (GS) contacts substrate.

This sequence belongs to the diaminopimelate epimerase family. As to quaternary structure, homodimer.

It localises to the cytoplasm. The enzyme catalyses (2S,6S)-2,6-diaminopimelate = meso-2,6-diaminopimelate. The protein operates within amino-acid biosynthesis; L-lysine biosynthesis via DAP pathway; DL-2,6-diaminopimelate from LL-2,6-diaminopimelate: step 1/1. Catalyzes the stereoinversion of LL-2,6-diaminopimelate (L,L-DAP) to meso-diaminopimelate (meso-DAP), a precursor of L-lysine and an essential component of the bacterial peptidoglycan. The chain is Diaminopimelate epimerase from Mannheimia succiniciproducens (strain KCTC 0769BP / MBEL55E).